The following is a 235-amino-acid chain: Putative cobalt transport protein CbiM 2 (235 aa).

Helical transmembrane passes span 9-29 (PAGW…MGII), 41-61 (YLPL…LKLP), 80-100 (FGYC…ALLL), 107-127 (TMGA…YAVY), 135-155 (INIY…TYII), 160-180 (LALA…AFFS), and 181-201 (IFAI…ALVF).

Belongs to the CbiM family. In terms of assembly, forms an energy-coupling factor (ECF) transporter complex composed of an ATP-binding protein (A component, CbiO), a transmembrane protein (T component, CbiQ) and 2 possible substrate-capture proteins (S components, CbiM and CbiN) of unknown stoichimetry.

The protein resides in the cell membrane. It participates in cofactor biosynthesis; adenosylcobalamin biosynthesis. In terms of biological role, part of the energy-coupling factor (ECF) transporter complex CbiMNOQ involved in cobalt import. The protein is Putative cobalt transport protein CbiM 2 of Methanosphaerula palustris (strain ATCC BAA-1556 / DSM 19958 / E1-9c).